The following is a 114-amino-acid chain: Small ribosomal subunit protein uS13m (114 aa).

Residues 92-114 (DGLPLRGQRSHTNARTSRKRIRK) form a disordered region.

Belongs to the universal ribosomal protein uS13 family. As to quaternary structure, part of the small ribosomal subunit.

The protein resides in the mitochondrion. Located at the top of the head of the small subunit, it contacts several helices of the 18S rRNA. This chain is Small ribosomal subunit protein uS13m (RPS13), found in Oenothera berteroana (Bertero's evening primrose).